The chain runs to 421 residues: Structure-specific endonuclease subunit SLX1 (421 aa).

Positions Ala-13–Glu-95 constitute a GIY-YIG domain. 2 disordered regions span residues Thr-34–Ser-57 and Val-96–Gly-120. Residues Cys-225–Cys-280 form an SLX1-type zinc finger. Basic residues predominate over residues Arg-310–Ser-322. Positions Arg-310–Thr-339 are disordered.

The protein belongs to the SLX1 family. As to quaternary structure, forms a heterodimer with SLX4. A divalent metal cation is required as a cofactor.

It is found in the nucleus. Its function is as follows. Catalytic subunit of the SLX1-SLX4 structure-specific endonuclease that resolves DNA secondary structures generated during DNA repair and recombination. Has endonuclease activity towards branched DNA substrates, introducing single-strand cuts in duplex DNA close to junctions with ss-DNA. In Ajellomyces capsulatus (strain G186AR / H82 / ATCC MYA-2454 / RMSCC 2432) (Darling's disease fungus), this protein is Structure-specific endonuclease subunit SLX1.